The following is a 240-amino-acid chain: Large ribosomal subunit protein uL2 (240 aa).

The tract at residues 199–240 (DHPFGGGGRQHPGRPKSVSRDAAPGRKVGDIASKRTGRGGNE) is disordered. Residues 221 to 231 (APGRKVGDIAS) are compositionally biased toward basic and acidic residues.

It belongs to the universal ribosomal protein uL2 family. In terms of assembly, part of the 50S ribosomal subunit. Forms a bridge to the 30S subunit in the 70S ribosome.

Its function is as follows. One of the primary rRNA binding proteins. Required for association of the 30S and 50S subunits to form the 70S ribosome, for tRNA binding and peptide bond formation. It has been suggested to have peptidyltransferase activity; this is somewhat controversial. Makes several contacts with the 16S rRNA in the 70S ribosome. The polypeptide is Large ribosomal subunit protein uL2 (Halobacterium salinarum (strain ATCC 29341 / DSM 671 / R1)).